Consider the following 66-residue polypeptide: Defensin-B1 (66 aa).

An N-terminal signal peptide occupies residues 1-23 (MNAHVLLLCTILFLLVHTPPVLG). Disulfide bonds link Cys29/Cys56, Cys36/Cys50, and Cys40/Cys57. The propeptide occupies 61–66 (VLMEDG).

The protein belongs to the beta-defensin family. Expressed at low levels in kidney, lung, and spleen.

It is found in the secreted. Functionally, has bactericidal activity. May act as a ligand for C-C chemokine receptor CCR6. Positively regulates the sperm motility and bactericidal activity in a CCR6-dependent manner. Binds to CCR6 and triggers Ca2+ mobilization in the sperm which is important for its motility. This chain is Defensin-B1, found in Ornithorhynchus anatinus (Duckbill platypus).